The following is a 159-amino-acid chain: Ribosomal RNA large subunit methyltransferase H (159 aa).

Residues L76 and G108 each coordinate S-adenosyl-L-methionine.

This sequence belongs to the RNA methyltransferase RlmH family. Homodimer.

The protein localises to the cytoplasm. The enzyme catalyses pseudouridine(1915) in 23S rRNA + S-adenosyl-L-methionine = N(3)-methylpseudouridine(1915) in 23S rRNA + S-adenosyl-L-homocysteine + H(+). Its function is as follows. Specifically methylates the pseudouridine at position 1915 (m3Psi1915) in 23S rRNA. In Limosilactobacillus fermentum (strain NBRC 3956 / LMG 18251) (Lactobacillus fermentum), this protein is Ribosomal RNA large subunit methyltransferase H.